A 319-amino-acid chain; its full sequence is tRNA dimethylallyltransferase (319 aa).

10–17 (GPTAVGKT) provides a ligand contact to ATP. Position 12–17 (12–17 (TAVGKT)) interacts with substrate. The interaction with substrate tRNA stretch occupies residues 35–38 (DSMQ).

This sequence belongs to the IPP transferase family. As to quaternary structure, monomer. Mg(2+) serves as cofactor.

The enzyme catalyses adenosine(37) in tRNA + dimethylallyl diphosphate = N(6)-dimethylallyladenosine(37) in tRNA + diphosphate. Functionally, catalyzes the transfer of a dimethylallyl group onto the adenine at position 37 in tRNAs that read codons beginning with uridine, leading to the formation of N6-(dimethylallyl)adenosine (i(6)A). This chain is tRNA dimethylallyltransferase, found in Symbiobacterium thermophilum (strain DSM 24528 / JCM 14929 / IAM 14863 / T).